A 193-amino-acid chain; its full sequence is Xanthine phosphoribosyltransferase (193 aa).

Xanthine-binding residues include leucine 20 and asparagine 27. 128 to 132 (ASGGT) contributes to the 5-phospho-alpha-D-ribose 1-diphosphate binding site. Lysine 156 is a binding site for xanthine.

The protein belongs to the purine/pyrimidine phosphoribosyltransferase family. Xpt subfamily. In terms of assembly, homodimer.

The protein localises to the cytoplasm. It catalyses the reaction XMP + diphosphate = xanthine + 5-phospho-alpha-D-ribose 1-diphosphate. The protein operates within purine metabolism; XMP biosynthesis via salvage pathway; XMP from xanthine: step 1/1. Converts the preformed base xanthine, a product of nucleic acid breakdown, to xanthosine 5'-monophosphate (XMP), so it can be reused for RNA or DNA synthesis. This is Xanthine phosphoribosyltransferase from Deinococcus deserti (strain DSM 17065 / CIP 109153 / LMG 22923 / VCD115).